A 553-amino-acid polypeptide reads, in one-letter code: Chaperonin GroEL 2 (553 aa).

Residues 29–32, 86–90, glycine 414, and aspartate 495 each bind ATP; these read TLGP and DGTTT.

It belongs to the chaperonin (HSP60) family. As to quaternary structure, forms a cylinder of 14 subunits composed of two heptameric rings stacked back-to-back. Interacts with the co-chaperonin GroES.

It is found in the cytoplasm. The catalysed reaction is ATP + H2O + a folded polypeptide = ADP + phosphate + an unfolded polypeptide.. Together with its co-chaperonin GroES, plays an essential role in assisting protein folding. The GroEL-GroES system forms a nano-cage that allows encapsulation of the non-native substrate proteins and provides a physical environment optimized to promote and accelerate protein folding. This chain is Chaperonin GroEL 2, found in Gloeobacter violaceus (strain ATCC 29082 / PCC 7421).